The chain runs to 504 residues: Cytochrome P450 2D1 (504 aa).

Cysteine 446 lines the heme pocket.

It belongs to the cytochrome P450 family. Heme is required as a cofactor.

The protein resides in the endoplasmic reticulum membrane. It localises to the microsome membrane. It carries out the reaction an organic molecule + reduced [NADPH--hemoprotein reductase] + O2 = an alcohol + oxidized [NADPH--hemoprotein reductase] + H2O + H(+). Cytochromes P450 are a group of heme-thiolate monooxygenases. In liver microsomes, this enzyme is involved in an NADPH-dependent electron transport pathway. It oxidizes a variety of structurally unrelated compounds, including steroids, fatty acids, and xenobiotics. This Rattus norvegicus (Rat) protein is Cytochrome P450 2D1 (Cyp2d1).